The sequence spans 201 residues: Akirin-2 (201 aa).

Residues Ser18 and Ser21 each carry the phosphoserine modification. The short motif at 22-27 is the Nuclear localization signal element; sequence PKRRRC. A Phosphoserine modification is found at Ser55. The short motif at 198 to 201 is the SYVS motif element; sequence SYVS.

It belongs to the akirin family. As to quaternary structure, homodimer. Interacts with IPO9; the interaction is direct. Associates with 20S and 26S proteasomes. Interacts with SMARCD1; promoting SWI/SNF complex recruitment. Interacts with NFKBIZ. Interacts with YWHAB. Post-translationally, polyubiquitinated. Polyubiquitination is dependent of UBR5 that extends pre-ubiquitinated AKIRIN2. In terms of tissue distribution, highly expressed in testis, cerebrum and cerebellum, and barely detectable in liver, heart, spleen and muscle. Also highly expressed in various tumor cells from hepatoma, glioblastoma and pheochromocytoma.

It is found in the nucleus. It localises to the cytoplasm. Its subcellular location is the membrane. Its function is as follows. Molecular adapter that acts as a bridge between a variety of multiprotein complexes, and which is involved in embryonic development, immunity, myogenesis and brain development. Plays a key role in nuclear protein degradation by promoting import of proteasomes into the nucleus: directly binds to fully assembled 20S proteasomes at one end and to nuclear import receptor IPO9 at the other end, bridging them together and mediating the import of pre-assembled proteasome complexes through the nuclear pore. Involved in innate immunity by regulating the production of interleukin-6 (IL6) downstream of Toll-like receptor (TLR): acts by bridging the NF-kappa-B inhibitor NFKBIZ and the SWI/SNF complex, leading to promote induction of IL6. Also involved in adaptive immunity by promoting B-cell activation. Involved in brain development: required for the survival and proliferation of cerebral cortical progenitor cells. Involved in myogenesis: required for skeletal muscle formation and skeletal development, possibly by regulating expression of muscle differentiation factors. Also plays a role in facilitating interdigital tissue regression during limb development. The polypeptide is Akirin-2 (Rattus norvegicus (Rat)).